A 202-amino-acid polypeptide reads, in one-letter code: Small ribosomal subunit protein uS4c (202 aa).

The S4 RNA-binding domain occupies 90-150 (MRLDNVIFRL…NQRKSQAIIN (61 aa)).

This sequence belongs to the universal ribosomal protein uS4 family. As to quaternary structure, part of the 30S ribosomal subunit. Contacts protein S5. The interaction surface between S4 and S5 is involved in control of translational fidelity.

It is found in the plastid. Its subcellular location is the chloroplast. One of the primary rRNA binding proteins, it binds directly to 16S rRNA where it nucleates assembly of the body of the 30S subunit. In terms of biological role, with S5 and S12 plays an important role in translational accuracy. This Canalohypopterygium tamariscinum (Moss) protein is Small ribosomal subunit protein uS4c (rps4).